Reading from the N-terminus, the 207-residue chain is Ribosomal RNA small subunit methyltransferase G (207 aa).

Residues Gly-74, Leu-79, Val-125 to Glu-126, and Arg-140 each bind S-adenosyl-L-methionine.

Belongs to the methyltransferase superfamily. RNA methyltransferase RsmG family.

The protein resides in the cytoplasm. It catalyses the reaction guanosine(527) in 16S rRNA + S-adenosyl-L-methionine = N(7)-methylguanosine(527) in 16S rRNA + S-adenosyl-L-homocysteine. Specifically methylates the N7 position of guanine in position 527 of 16S rRNA. This is Ribosomal RNA small subunit methyltransferase G from Shewanella halifaxensis (strain HAW-EB4).